Here is a 1476-residue protein sequence, read N- to C-terminus: ABC transporter G family member 17 (1476 aa).

Disordered regions lie at residues 13–45 and 68–91; these read SENN…YDYD and FREI…KPEN. A coiled-coil region spans residues 14–67; sequence ENNNNNNNNNNNNNNNNNNNLNNNNDNDYDYDSINNIEEKFENVSKELEGQSIK. The span at 15–39 shows a compositional bias: low complexity; it reads NNNNNNNNNNNNNNNNNNNLNNNND. Residues 151-402 form the ABC transporter 1 domain; that stretch reads LNPFNYFKKD…FLDLGFDCEP (252 aa). The ABC transmembrane type-2 1 domain maps to 507–751; sequence WGDKFTLTSR…SLSVKGENYL (245 aa). Helical transmembrane passes span 517 to 537, 547 to 567, 592 to 612, 623 to 643, and 764 to 784; these read FLTI…QPLT, AIFT…HGAL, ILID…IVYF, FFIF…LFRG, and LNVV…LFAV. The 245-residue stretch at 838 to 1082 folds into the ABC transporter 2 domain; that stretch reads FSWKSISYTV…LTSYFERHGV (245 aa). Position 874 to 881 (874 to 881) interacts with ATP; the sequence is GSSGAGKT. Transmembrane regions (helical) follow at residues 1182-1202, 1219-1239, 1260-1280, 1298-1318, 1322-1342, and 1450-1470; these read FYTM…GFTF, SWEA…MFFI, LSMI…FFIA, WLMH…LGAA, IAIS…LCGV, and FGII…FVYL. Positions 1182 to 1405 constitute an ABC transmembrane type-2 2 domain; sequence FYTMGSFAQS…TDCQTYSAPF (224 aa).

Belongs to the ABC transporter superfamily. ABCG family. PDR (TC 3.A.1.205) subfamily.

It localises to the membrane. This is ABC transporter G family member 17 (abcG17-1) from Dictyostelium discoideum (Social amoeba).